Here is a 423-residue protein sequence, read N- to C-terminus: Kynureninase (423 aa).

Pyridoxal 5'-phosphate contacts are provided by residues Leu105, Ser106, 133 to 136 (FPSD), Asp218, His221, and Tyr243. N6-(pyridoxal phosphate)lysine is present on Lys244. Positions 273 and 301 each coordinate pyridoxal 5'-phosphate.

Belongs to the kynureninase family. Homodimer. Requires pyridoxal 5'-phosphate as cofactor.

The catalysed reaction is L-kynurenine + H2O = anthranilate + L-alanine + H(+). The enzyme catalyses 3-hydroxy-L-kynurenine + H2O = 3-hydroxyanthranilate + L-alanine + H(+). It functions in the pathway amino-acid degradation; L-kynurenine degradation; L-alanine and anthranilate from L-kynurenine: step 1/1. It participates in cofactor biosynthesis; NAD(+) biosynthesis; quinolinate from L-kynurenine: step 2/3. Functionally, catalyzes the cleavage of L-kynurenine (L-Kyn) and L-3-hydroxykynurenine (L-3OHKyn) into anthranilic acid (AA) and 3-hydroxyanthranilic acid (3-OHAA), respectively. This is Kynureninase from Xanthomonas euvesicatoria pv. vesicatoria (strain 85-10) (Xanthomonas campestris pv. vesicatoria).